Here is a 231-residue protein sequence, read N- to C-terminus: Putative N-acetylmannosamine-6-phosphate 2-epimerase (231 aa).

The protein belongs to the NanE family.

The catalysed reaction is an N-acyl-D-glucosamine 6-phosphate = an N-acyl-D-mannosamine 6-phosphate. Its pathway is amino-sugar metabolism; N-acetylneuraminate degradation; D-fructose 6-phosphate from N-acetylneuraminate: step 3/5. Converts N-acetylmannosamine-6-phosphate (ManNAc-6-P) to N-acetylglucosamine-6-phosphate (GlcNAc-6-P). The chain is Putative N-acetylmannosamine-6-phosphate 2-epimerase from Listeria monocytogenes serotype 4b (strain F2365).